The sequence spans 175 residues: CASP-like protein 2C1 (175 aa).

Topologically, residues 1–7 (MVKLRET) are cytoplasmic. The helical transmembrane segment at 8–28 (EVILRLCIVFFLLLTSCLIGL) threads the bilayer. Over 29–45 (DSQTKEIAYIHKNVSFR) the chain is Extracellular. An N-linked (GlcNAc...) asparagine glycan is attached at N41. The chain crosses the membrane as a helical span at residues 46 to 66 (YLLALEAELYIDVVVAAYNLV). Residues 67–91 (QLGLGWYNVEQKTSNPKWFSYLLDQ) are Cytoplasmic-facing. The chain crosses the membrane as a helical span at residues 92-112 (TAAYVVFAGTSAAAQHSLLVV). Over 113-136 (TGSRELQWMKWCYKFTRFCFQMGS) the chain is Extracellular. A helical membrane pass occupies residues 137-157 (AIILNYIAAALMVLLSSISAF). The Cytoplasmic portion of the chain corresponds to 158 to 175 (NLFRLYSPKRFFRFKSSS).

This sequence belongs to the Casparian strip membrane proteins (CASP) family. Homodimer and heterodimers.

The protein resides in the cell membrane. The protein is CASP-like protein 2C1 of Arabidopsis thaliana (Mouse-ear cress).